The sequence spans 1400 residues: DNA-directed RNA polymerase subunit beta' (1400 aa).

Zn(2+)-binding residues include Cys-71, Cys-73, Cys-86, and Cys-89. Mg(2+)-binding residues include Asp-462, Asp-464, and Asp-466. Residues Cys-811, Cys-885, Cys-892, and Cys-895 each coordinate Zn(2+).

The protein belongs to the RNA polymerase beta' chain family. In terms of assembly, the RNAP catalytic core consists of 2 alpha, 1 beta, 1 beta' and 1 omega subunit. When a sigma factor is associated with the core the holoenzyme is formed, which can initiate transcription. Requires Mg(2+) as cofactor. Zn(2+) is required as a cofactor.

It carries out the reaction RNA(n) + a ribonucleoside 5'-triphosphate = RNA(n+1) + diphosphate. DNA-dependent RNA polymerase catalyzes the transcription of DNA into RNA using the four ribonucleoside triphosphates as substrates. The sequence is that of DNA-directed RNA polymerase subunit beta' from Brucella suis biovar 1 (strain 1330).